A 473-amino-acid chain; its full sequence is Bifunctional protein GlmU (473 aa).

The tract at residues 1-240 (MAIHPLDVVI…AAQVAGVNSP (240 aa)) is pyrophosphorylase. Residues Lys25, Gln83, 88 to 89 (GT), 110 to 112 (SGD), Gly147, Glu165, and Asn238 contribute to the UDP-N-acetyl-alpha-D-glucosamine site. Asp112 is a Mg(2+) binding site. Residue Asn238 coordinates Mg(2+). A linker region spans residues 241–261 (VQLAELERVYQQRLATTLMEQ). Residues 262 to 473 (GVRLADPARL…WARPVKKPGV (212 aa)) form an N-acetyltransferase region. 2 residues coordinate UDP-N-acetyl-alpha-D-glucosamine: Arg348 and Lys366. The active-site Proton acceptor is the His378. UDP-N-acetyl-alpha-D-glucosamine contacts are provided by Tyr381 and Asn392. Residues Ala395, 401-402 (NY), Ser420, Gly438, and Arg455 each bind acetyl-CoA.

In the N-terminal section; belongs to the N-acetylglucosamine-1-phosphate uridyltransferase family. It in the C-terminal section; belongs to the transferase hexapeptide repeat family. Homotrimer. Requires Mg(2+) as cofactor.

The protein localises to the cytoplasm. The catalysed reaction is alpha-D-glucosamine 1-phosphate + acetyl-CoA = N-acetyl-alpha-D-glucosamine 1-phosphate + CoA + H(+). It carries out the reaction N-acetyl-alpha-D-glucosamine 1-phosphate + UTP + H(+) = UDP-N-acetyl-alpha-D-glucosamine + diphosphate. It functions in the pathway nucleotide-sugar biosynthesis; UDP-N-acetyl-alpha-D-glucosamine biosynthesis; N-acetyl-alpha-D-glucosamine 1-phosphate from alpha-D-glucosamine 6-phosphate (route II): step 2/2. The protein operates within nucleotide-sugar biosynthesis; UDP-N-acetyl-alpha-D-glucosamine biosynthesis; UDP-N-acetyl-alpha-D-glucosamine from N-acetyl-alpha-D-glucosamine 1-phosphate: step 1/1. Its pathway is bacterial outer membrane biogenesis; LPS lipid A biosynthesis. In terms of biological role, catalyzes the last two sequential reactions in the de novo biosynthetic pathway for UDP-N-acetylglucosamine (UDP-GlcNAc). The C-terminal domain catalyzes the transfer of acetyl group from acetyl coenzyme A to glucosamine-1-phosphate (GlcN-1-P) to produce N-acetylglucosamine-1-phosphate (GlcNAc-1-P), which is converted into UDP-GlcNAc by the transfer of uridine 5-monophosphate (from uridine 5-triphosphate), a reaction catalyzed by the N-terminal domain. This is Bifunctional protein GlmU from Polaromonas naphthalenivorans (strain CJ2).